The primary structure comprises 178 residues: Alkyl hydroperoxide reductase AhpD (178 aa).

Residue Cys-130 is the Proton donor of the active site. Cysteines 130 and 133 form a disulfide. Cys-133 (cysteine sulfenic acid (-SOH) intermediate) is an active-site residue.

The protein belongs to the AhpD family. Homotrimer.

It carries out the reaction N(6)-[(R)-dihydrolipoyl]-L-lysyl-[lipoyl-carrier protein] + a hydroperoxide = N(6)-[(R)-lipoyl]-L-lysyl-[lipoyl-carrier protein] + an alcohol + H2O. Functionally, antioxidant protein with alkyl hydroperoxidase activity. Required for the reduction of the AhpC active site cysteine residues and for the regeneration of the AhpC enzyme activity. This Mycobacterium ulcerans (strain Agy99) protein is Alkyl hydroperoxide reductase AhpD.